Reading from the N-terminus, the 279-residue chain is Probable phosphatase phospho1 (279 aa).

D41 (nucleophile) is an active-site residue. Mg(2+) contacts are provided by D41 and D43. Catalysis depends on D43, which acts as the Proton donor. Substrate-binding residues include D52 and D133. Residue D215 coordinates Mg(2+).

It belongs to the HAD-like hydrolase superfamily. PHOSPHO family. Requires Mg(2+) as cofactor.

It is found in the extracellular vesicle. It catalyses the reaction phosphoethanolamine + H2O = ethanolamine + phosphate. It carries out the reaction phosphocholine + H2O = choline + phosphate. Functionally, phosphatase that has a high activity toward phosphoethanolamine (PEA) and phosphocholine (PCho). Involved in the generation of inorganic phosphate for bone mineralization. This Danio rerio (Zebrafish) protein is Probable phosphatase phospho1 (phospho1).